Reading from the N-terminus, the 85-residue chain is UPF0181 protein YPTS_1774 (85 aa).

Basic and acidic residues predominate over residues 57–72 (DHDFDEHTESDYRRDD). Residues 57 to 85 (DHDFDEHTESDYRRDDEPDADDIEDLYEG) form a disordered region. Positions 73-85 (EPDADDIEDLYEG) are enriched in acidic residues.

Belongs to the UPF0181 family.

The polypeptide is UPF0181 protein YPTS_1774 (Yersinia pseudotuberculosis serotype IB (strain PB1/+)).